Here is a 505-residue protein sequence, read N- to C-terminus: Glutamate--tRNA ligase (505 aa).

The short motif at 12–22 (PSPTGDPHVGT) is the 'HIGH' region element. The short motif at 253 to 257 (KLSKR) is the 'KMSKS' region element. K256 serves as a coordination point for ATP.

Belongs to the class-I aminoacyl-tRNA synthetase family. Glutamate--tRNA ligase type 1 subfamily. As to quaternary structure, monomer.

Its subcellular location is the cytoplasm. The catalysed reaction is tRNA(Glu) + L-glutamate + ATP = L-glutamyl-tRNA(Glu) + AMP + diphosphate. In terms of biological role, catalyzes the attachment of glutamate to tRNA(Glu) in a two-step reaction: glutamate is first activated by ATP to form Glu-AMP and then transferred to the acceptor end of tRNA(Glu). The protein is Glutamate--tRNA ligase of Chlamydia felis (strain Fe/C-56) (Chlamydophila felis).